The chain runs to 421 residues: O-glycosyltransferase braB (421 aa).

Residues 1–26 (MVPSVMEGAPQLGITSTDTSSAGVPP) form a disordered region. Positions 13-22 (GITSTDTSSA) are enriched in polar residues.

It belongs to the afumC glycosyltransferase family.

It functions in the pathway secondary metabolite biosynthesis. O-glycosyltransferase; part of the gene cluster that mediates the biosynthesis of the brasilane terpene glycosides brasilane D and E. The biosynthesis starts with the activity of the terpene cyclase braA that converts farnesyl pyrophosphate into the sesquiterpene alcohol trichobrasilenol. Subsequently, trichobrasilenol is glycosylated by the O-glycosyltransferase braB putatively using UDP-GlcNAc as sugar donor to yield brasilane A. The latter then undergoes two rounds of oxidation performed by the cytochrome P450 monooxygenase braC. In the first round braC hydroxylates C-12 forming brasilane D, which serves as substrate in the second round to establish the epoxide at the bond between C-5 and C-10 and oxidize the alcohol at C-12 to an aldehyde leading to the final product brasilane E. BraB is also able to glycosylate geraniol, linalool, perillyl alcohol, 3,4-dichlorophenol and, to a lesser extend, benzyl alcohol. In Annulohypoxylon truncatum (Hypoxylon truncatum), this protein is O-glycosyltransferase braB.